The following is a 413-amino-acid chain: Imidazolonepropionase (413 aa).

Fe(3+) is bound by residues His70 and His72. The Zn(2+) site is built by His70 and His72. 3 residues coordinate 4-imidazolone-5-propanoate: Arg79, Tyr142, and His175. Tyr142 contacts N-formimidoyl-L-glutamate. His240 contacts Fe(3+). His240 is a Zn(2+) binding site. Residue Glu243 coordinates 4-imidazolone-5-propanoate. A Fe(3+)-binding site is contributed by Asp315. Residue Asp315 participates in Zn(2+) binding. N-formimidoyl-L-glutamate contacts are provided by Asn317 and Gly319. Ser320 lines the 4-imidazolone-5-propanoate pocket.

Belongs to the metallo-dependent hydrolases superfamily. HutI family. It depends on Zn(2+) as a cofactor. The cofactor is Fe(3+).

It localises to the cytoplasm. The catalysed reaction is 4-imidazolone-5-propanoate + H2O = N-formimidoyl-L-glutamate. Its pathway is amino-acid degradation; L-histidine degradation into L-glutamate; N-formimidoyl-L-glutamate from L-histidine: step 3/3. In terms of biological role, catalyzes the hydrolytic cleavage of the carbon-nitrogen bond in imidazolone-5-propanoate to yield N-formimidoyl-L-glutamate. It is the third step in the universal histidine degradation pathway. This is Imidazolonepropionase from Treponema denticola (strain ATCC 35405 / DSM 14222 / CIP 103919 / JCM 8153 / KCTC 15104).